A 376-amino-acid chain; its full sequence is Pre-mRNA-splicing factor cwf25 (376 aa).

The stretch at 25–60 (KDEQAHKEEMKRVEQLRREIEEERQLLELHRLQEAA) forms a coiled coil. Disordered stretches follow at residues 153-211 (LMEK…DRNN) and 258-289 (RTSR…ITQR). Basic and acidic residues predominate over residues 154 to 167 (MEKRKYSLDSDRKS). Basic residues predominate over residues 168-178 (KERRHRDRHHR). Residues 179 to 199 (SNQDRSRERSDNEQHSSDKRE) show a composition bias toward basic and acidic residues. 2 positions are modified to phosphoserine: S266 and S268. Residues 286 to 334 (ITQRHTDIESRLQKMQDNAKELDESRRKKIELLEKKERDEEQFLEKERR) are a coiled coil.

This sequence belongs to the CWC25 family. As to quaternary structure, belongs to the 40S cdc5-associated complex (or cwf complex), a spliceosome sub-complex reminiscent of a late-stage spliceosome composed of the U2, U5 and U6 snRNAs and at least brr2, cdc5, cwf2/prp3, cwf3/syf1, cwf4/syf3, cwf5/ecm2, spp42/cwf6, cwf7/spf27, cwf8, cwf9, cwf10, cwf11, cwf12, prp45/cwf13, cwf14, cwf15, cwf16, cwf17, cwf18, cwf19, cwf20, cwf21, cwf22, cwf23, cwf24, cwf25, cwf26, cyp7/cwf27, cwf28, cwf29/ist3, lea1, msl1, prp5/cwf1, prp10, prp12/sap130, prp17, prp22, sap61, sap62, sap114, sap145, slu7, smb1, smd1, smd3, smf1, smg1 and syf2.

It localises to the nucleus. In terms of biological role, involved in mRNA splicing. The sequence is that of Pre-mRNA-splicing factor cwf25 (cwf25) from Schizosaccharomyces pombe (strain 972 / ATCC 24843) (Fission yeast).